We begin with the raw amino-acid sequence, 233 residues long: Leucyl/phenylalanyl-tRNA--protein transferase (233 aa).

The protein belongs to the L/F-transferase family.

The protein localises to the cytoplasm. The catalysed reaction is N-terminal L-lysyl-[protein] + L-leucyl-tRNA(Leu) = N-terminal L-leucyl-L-lysyl-[protein] + tRNA(Leu) + H(+). It carries out the reaction N-terminal L-arginyl-[protein] + L-leucyl-tRNA(Leu) = N-terminal L-leucyl-L-arginyl-[protein] + tRNA(Leu) + H(+). The enzyme catalyses L-phenylalanyl-tRNA(Phe) + an N-terminal L-alpha-aminoacyl-[protein] = an N-terminal L-phenylalanyl-L-alpha-aminoacyl-[protein] + tRNA(Phe). Its function is as follows. Functions in the N-end rule pathway of protein degradation where it conjugates Leu, Phe and, less efficiently, Met from aminoacyl-tRNAs to the N-termini of proteins containing an N-terminal arginine or lysine. The sequence is that of Leucyl/phenylalanyl-tRNA--protein transferase from Anaeromyxobacter dehalogenans (strain 2CP-C).